Consider the following 595-residue polypeptide: UvrABC system protein C (595 aa).

The region spanning 14 to 91 (DSPGCYIHKD…IQENKPKYNI (78 aa)) is the GIY-YIG domain. The 36-residue stretch at 196–231 (DKIVNELRDKMTKASELMEFERAAEYRDLIEGIGLL) folds into the UVR domain.

It belongs to the UvrC family. As to quaternary structure, interacts with UvrB in an incision complex.

The protein resides in the cytoplasm. The UvrABC repair system catalyzes the recognition and processing of DNA lesions. UvrC both incises the 5' and 3' sides of the lesion. The N-terminal half is responsible for the 3' incision and the C-terminal half is responsible for the 5' incision. This Streptococcus mutans serotype c (strain ATCC 700610 / UA159) protein is UvrABC system protein C.